The sequence spans 481 residues: PTS system N-acetylmuramic acid-specific EIIBC component (481 aa).

The 89-residue stretch at Met-1–Val-89 folds into the PTS EIIB type-1 domain. Residue Cys-28 is the Phosphocysteine intermediate; for EIIB activity of the active site. The PTS EIIC type-1 domain maps to Ser-122–Ser-481. 10 consecutive transmembrane segments (helical) span residues Phe-124–Ile-144, Leu-165–Gly-185, Gln-190–Tyr-210, Phe-225–Leu-245, Met-263–Met-283, Ala-307–Val-327, Leu-342–Ala-362, Gly-376–Pro-396, Ile-406–Gly-426, and Ile-448–Ala-468.

The protein localises to the cell inner membrane. It carries out the reaction N-acetyl-beta-D-muramate(out) + N(pros)-phospho-L-histidyl-[protein] = N-acetyl-beta-D-muramate 6-phosphate(in) + L-histidyl-[protein]. The phosphoenolpyruvate-dependent sugar phosphotransferase system (sugar PTS), a major carbohydrate active transport system, catalyzes the phosphorylation of incoming sugar substrates concomitantly with their translocation across the cell membrane. This system is involved in N-acetylmuramic acid (MurNAc) transport, yielding cytoplasmic MurNAc-6-P. Is also able to take up anhydro-N-acetylmuramic acid (anhMurNAc), but cannot phosphorylate the carbon 6, probably because of the 1,6-anhydro ring. This Vibrio cholerae serotype O1 (strain ATCC 39315 / El Tor Inaba N16961) protein is PTS system N-acetylmuramic acid-specific EIIBC component (murP).